The chain runs to 482 residues: ATP synthase subunit beta, chloroplastic (482 aa).

An ATP-binding site is contributed by 162–169 (GGAGVGKT).

Belongs to the ATPase alpha/beta chains family. F-type ATPases have 2 components, CF(1) - the catalytic core - and CF(0) - the membrane proton channel. CF(1) has five subunits: alpha(3), beta(3), gamma(1), delta(1), epsilon(1). CF(0) has four main subunits: a(1), b(1), b'(1) and c(9-12).

The protein localises to the plastid. It localises to the chloroplast thylakoid membrane. The enzyme catalyses ATP + H2O + 4 H(+)(in) = ADP + phosphate + 5 H(+)(out). Produces ATP from ADP in the presence of a proton gradient across the membrane. The catalytic sites are hosted primarily by the beta subunits. This chain is ATP synthase subunit beta, chloroplastic, found in Pleurastrum terricola (Filamentous green alga).